A 325-amino-acid chain; its full sequence is NADH-quinone oxidoreductase subunit H (325 aa).

Helical transmembrane passes span I11–F31, A81–V101, I114–G134, L154–F174, V186–V206, F237–F257, L265–I285, and V304–A324.

It belongs to the complex I subunit 1 family. In terms of assembly, NDH-1 is composed of 13 different subunits. Subunits NuoA, H, J, K, L, M, N constitute the membrane sector of the complex.

It localises to the cell inner membrane. It catalyses the reaction a quinone + NADH + 5 H(+)(in) = a quinol + NAD(+) + 4 H(+)(out). NDH-1 shuttles electrons from NADH, via FMN and iron-sulfur (Fe-S) centers, to quinones in the respiratory chain. The immediate electron acceptor for the enzyme in this species is believed to be ubiquinone. Couples the redox reaction to proton translocation (for every two electrons transferred, four hydrogen ions are translocated across the cytoplasmic membrane), and thus conserves the redox energy in a proton gradient. This subunit may bind ubiquinone. The polypeptide is NADH-quinone oxidoreductase subunit H (Yersinia pseudotuberculosis serotype O:1b (strain IP 31758)).